We begin with the raw amino-acid sequence, 698 residues long: Pentatricopeptide repeat-containing protein 1, mitochondrial (698 aa).

Residues 49–88 (SSSQLPLGQERQENTGSLGSDPSHSNSTATQEEDEEESFG) form a disordered region. Residues 62-78 (NTGSLGSDPSHSNSTAT) show a composition bias toward polar residues. PPR repeat units lie at residues 133–169 (TPYW…RLQP), 170–204 (MESN…DLEP), 205–243 (SDAT…NFEL), 244–278 (NLKT…GHVV), 279–315 (TEET…GLQP), and 316–352 (SRDS…ATVL). Residues 392–419 (QALGPPEPPEARVPSKAQPEVDTKAEPS) form a disordered region. PPR repeat units follow at residues 517 to 551 (DLTF…GLVP), 552 to 583 (NLQT…QVTP), and 584 to 618 (NSHI…RVPV). The segment at 670 to 698 (HPWQKFRTKPQEDQDTRKEADDGCALGGR) is disordered. Positions 678–690 (KPQEDQDTRKEAD) are enriched in basic and acidic residues.

This sequence belongs to the PTCD1 family. As to quaternary structure, associates with mitochondrial leucine tRNAs. Interacts with ELAC2.

It localises to the mitochondrion. Its subcellular location is the mitochondrion matrix. Mitochondrial protein implicated in negative regulation of leucine tRNA levels, as well as negative regulation of mitochondria-encoded proteins and COX activity. Also affects the 3'-processing of mitochondrial tRNAs. In Pongo abelii (Sumatran orangutan), this protein is Pentatricopeptide repeat-containing protein 1, mitochondrial (PTCD1).